The sequence spans 338 residues: tRNA N6-adenosine threonylcarbamoyltransferase (338 aa).

Residues His-111 and His-115 each contribute to the Fe cation site. Substrate-binding positions include 134-138 (LLSGG), Asp-167, Gly-180, and Asn-275. Residue Asp-304 participates in Fe cation binding.

The protein belongs to the KAE1 / TsaD family. Requires Fe(2+) as cofactor.

It localises to the cytoplasm. The catalysed reaction is L-threonylcarbamoyladenylate + adenosine(37) in tRNA = N(6)-L-threonylcarbamoyladenosine(37) in tRNA + AMP + H(+). Functionally, required for the formation of a threonylcarbamoyl group on adenosine at position 37 (t(6)A37) in tRNAs that read codons beginning with adenine. Is involved in the transfer of the threonylcarbamoyl moiety of threonylcarbamoyl-AMP (TC-AMP) to the N6 group of A37, together with TsaE and TsaB. TsaD likely plays a direct catalytic role in this reaction. The polypeptide is tRNA N6-adenosine threonylcarbamoyltransferase (Leptospira interrogans serogroup Icterohaemorrhagiae serovar copenhageni (strain Fiocruz L1-130)).